The following is a 166-amino-acid chain: Large ribosomal subunit protein bL9 (166 aa).

This sequence belongs to the bacterial ribosomal protein bL9 family.

Binds to the 23S rRNA. This chain is Large ribosomal subunit protein bL9, found in Borrelia garinii subsp. bavariensis (strain ATCC BAA-2496 / DSM 23469 / PBi) (Borreliella bavariensis).